A 188-amino-acid chain; its full sequence is ADP-ribosylation factor K (188 aa).

Residues 34-40 (DGAGKST), 75-79 (DVGGQ), and 134-137 (NKQD) each bind GTP.

It belongs to the small GTPase superfamily. Arf family.

The protein resides in the golgi apparatus. Its function is as follows. GTP-binding protein that may be involved in protein trafficking. May modulate vesicle budding and uncoating within the Golgi apparatus. This chain is ADP-ribosylation factor K (arrK), found in Dictyostelium discoideum (Social amoeba).